The sequence spans 148 residues: Putative FAD-linked sulfhydryl oxidase 096R (148 aa).

Positions 1-103 (MSIDPKLWGN…LAAKTVFQRY (103 aa)) constitute an ERV/ALR sulfhydryl oxidase domain. A disulfide bond links Cys48 and Cys51. A helical membrane pass occupies residues 122-142 (WSPWLTTALAVILVVVVAGIG).

It belongs to the IIV-6 347L family. Requires FAD as cofactor.

It localises to the membrane. It carries out the reaction 2 R'C(R)SH + O2 = R'C(R)S-S(R)CR' + H2O2. FAD-dependent sulfhydryl oxidase that catalyzes disulfide bond formation. The protein is Putative FAD-linked sulfhydryl oxidase 096R of Aedes vexans (Inland floodwater mosquito).